The primary structure comprises 306 residues: D-alanine--D-alanine ligase B (306 aa).

Catalysis depends on residues E15 and S150. The region spanning K101–E303 is the ATP-grasp domain. Residue I134–T189 participates in ATP binding. Mg(2+)-binding residues include D257, E270, and N272. S281 is an active-site residue.

The protein belongs to the D-alanine--D-alanine ligase family. Monomer. The cofactor is Mg(2+). Mn(2+) is required as a cofactor.

It is found in the cytoplasm. It catalyses the reaction 2 D-alanine + ATP = D-alanyl-D-alanine + ADP + phosphate + H(+). Its pathway is cell wall biogenesis; peptidoglycan biosynthesis. In terms of biological role, cell wall formation. This is D-alanine--D-alanine ligase B from Escherichia coli O6:H1 (strain CFT073 / ATCC 700928 / UPEC).